A 347-amino-acid polypeptide reads, in one-letter code: S-adenosylmethionine:tRNA ribosyltransferase-isomerase (347 aa).

It belongs to the QueA family. As to quaternary structure, monomer.

It is found in the cytoplasm. The enzyme catalyses 7-aminomethyl-7-carbaguanosine(34) in tRNA + S-adenosyl-L-methionine = epoxyqueuosine(34) in tRNA + adenine + L-methionine + 2 H(+). It participates in tRNA modification; tRNA-queuosine biosynthesis. Its function is as follows. Transfers and isomerizes the ribose moiety from AdoMet to the 7-aminomethyl group of 7-deazaguanine (preQ1-tRNA) to give epoxyqueuosine (oQ-tRNA). The sequence is that of S-adenosylmethionine:tRNA ribosyltransferase-isomerase from Bordetella pertussis (strain Tohama I / ATCC BAA-589 / NCTC 13251).